A 140-amino-acid chain; its full sequence is Aspartate 1-decarboxylase (140 aa).

The active-site Schiff-base intermediate with substrate; via pyruvic acid is S25. At S25 the chain carries Pyruvic acid (Ser). T57 is a binding site for substrate. The Proton donor role is filled by Y58. Residue 73-75 (GAA) coordinates substrate.

The protein belongs to the PanD family. Heterooctamer of four alpha and four beta subunits. The cofactor is pyruvate. In terms of processing, is synthesized initially as an inactive proenzyme, which is activated by self-cleavage at a specific serine bond to produce a beta-subunit with a hydroxyl group at its C-terminus and an alpha-subunit with a pyruvoyl group at its N-terminus.

The protein resides in the cytoplasm. The catalysed reaction is L-aspartate + H(+) = beta-alanine + CO2. It functions in the pathway cofactor biosynthesis; (R)-pantothenate biosynthesis; beta-alanine from L-aspartate: step 1/1. Catalyzes the pyruvoyl-dependent decarboxylation of aspartate to produce beta-alanine. This Persephonella marina (strain DSM 14350 / EX-H1) protein is Aspartate 1-decarboxylase.